We begin with the raw amino-acid sequence, 248 residues long: L-seryl-tRNA(Sec) kinase (248 aa).

7-14 (GLPGVGKS) is a binding site for ATP.

Belongs to the L-seryl-tRNA(Sec) kinase family.

The catalysed reaction is L-seryl-tRNA(Sec) + ATP = O-phospho-L-seryl-tRNA(Sec) + ADP. It participates in aminoacyl-tRNA biosynthesis; selenocysteinyl-tRNA(Sec) biosynthesis; selenocysteinyl-tRNA(Sec) from L-seryl-tRNA(Sec) (archaeal/eukaryal route): step 1/2. Its function is as follows. Specifically phosphorylates seryl-tRNA(Sec) to O-phosphoseryl-tRNA(Sec), an activated intermediate for selenocysteine biosynthesis. This chain is L-seryl-tRNA(Sec) kinase (pstK), found in Methanocaldococcus jannaschii (strain ATCC 43067 / DSM 2661 / JAL-1 / JCM 10045 / NBRC 100440) (Methanococcus jannaschii).